The sequence spans 179 residues: Large ribosomal subunit protein uL5 (179 aa).

It belongs to the universal ribosomal protein uL5 family. As to quaternary structure, part of the 50S ribosomal subunit; part of the 5S rRNA/L5/L18/L25 subcomplex. Contacts the 5S rRNA and the P site tRNA. Forms a bridge to the 30S subunit in the 70S ribosome.

In terms of biological role, this is one of the proteins that bind and probably mediate the attachment of the 5S RNA into the large ribosomal subunit, where it forms part of the central protuberance. In the 70S ribosome it contacts protein S13 of the 30S subunit (bridge B1b), connecting the 2 subunits; this bridge is implicated in subunit movement. Contacts the P site tRNA; the 5S rRNA and some of its associated proteins might help stabilize positioning of ribosome-bound tRNAs. In Vibrio vulnificus (strain CMCP6), this protein is Large ribosomal subunit protein uL5.